A 287-amino-acid chain; its full sequence is Lycopene elongase/hydratase (287 aa).

7 helical membrane passes run 15–35 (ISWVNTAYPFGLAYLLNAGEI), 37–57 (WLFWLGIVFFLIPYNIAMYGI), 97–117 (IPFLVILFIFGTWMSSLWLTI), 137–157 (FIDALTSSTHFTSPALIGATI), 166–186 (MWIALGSFFLWGMASQILGAV), 218–238 (LLAAVLVTTLPNPAWIIGIAI), and 265–285 (VFLWLNYFVGAVITILLIAIH).

Belongs to the UbiA prenyltransferase family.

The protein localises to the cell membrane. It catalyses the reaction all-trans-lycopene + dimethylallyl diphosphate + A + H2O = nonaflavuxanthin + AH2 + diphosphate. It carries out the reaction nonaflavuxanthin + dimethylallyl diphosphate + A + H2O = flavuxanthin + AH2 + diphosphate. The protein operates within carotenoid biosynthesis. In terms of biological role, catalyzes the elongation of the C(40) carotenoid all-trans-lycopene to the acyclic C(50) carotenoid flavuxanthin during decaprenoxanthin biosynthesis. Acts as a bifunctional enzyme that catalyzes the elongation of lycopene by attaching a C(5) isoprene unit at C-2, as well as the hydroxylation of the new isoprene unit. The enzyme acts at both ends of the substrate, forming the C(50) carotenoid flavuxanthin via the C(45) intermediate nonaflavuxanthin. The polypeptide is Lycopene elongase/hydratase (Corynebacterium glutamicum (Brevibacterium saccharolyticum)).